A 183-amino-acid chain; its full sequence is Translation initiation factor IF-3 (183 aa).

This sequence belongs to the IF-3 family. As to quaternary structure, monomer.

It is found in the cytoplasm. In terms of biological role, IF-3 binds to the 30S ribosomal subunit and shifts the equilibrium between 70S ribosomes and their 50S and 30S subunits in favor of the free subunits, thus enhancing the availability of 30S subunits on which protein synthesis initiation begins. The chain is Translation initiation factor IF-3 from Pseudomonas fluorescens (strain SBW25).